Here is a 372-residue protein sequence, read N- to C-terminus: Phospho-N-acetylmuramoyl-pentapeptide-transferase (372 aa).

10 consecutive transmembrane segments (helical) span residues 25-45 (RSLLSVLTSLTIGLVLGPIMI), 73-93 (TMGGILILLSIGISTLLWADL), 98-118 (VWIVLGVMVVFGAVGWADDWI), 134-154 (FFWTSVASLGAGIALYLIATQ), 176-196 (SIPLSIVPLGLAFIVFTYLVI), 211-231 (GLAIMPVVMVATGLGVFAYLS), 251-271 (LVVICSAMIGAGLAFLWYNAH), 275-295 (VFMGDVGALALGAMLGTIAVM), 300-320 (IVFAIMGGVFVMEAVSVFLQI), and 349-369 (QVVIRFWIITIMLVVLGLMTL).

This sequence belongs to the glycosyltransferase 4 family. MraY subfamily. Mg(2+) serves as cofactor.

Its subcellular location is the cell inner membrane. It catalyses the reaction UDP-N-acetyl-alpha-D-muramoyl-L-alanyl-gamma-D-glutamyl-meso-2,6-diaminopimeloyl-D-alanyl-D-alanine + di-trans,octa-cis-undecaprenyl phosphate = di-trans,octa-cis-undecaprenyl diphospho-N-acetyl-alpha-D-muramoyl-L-alanyl-D-glutamyl-meso-2,6-diaminopimeloyl-D-alanyl-D-alanine + UMP. Its pathway is cell wall biogenesis; peptidoglycan biosynthesis. In terms of biological role, catalyzes the initial step of the lipid cycle reactions in the biosynthesis of the cell wall peptidoglycan: transfers peptidoglycan precursor phospho-MurNAc-pentapeptide from UDP-MurNAc-pentapeptide onto the lipid carrier undecaprenyl phosphate, yielding undecaprenyl-pyrophosphoryl-MurNAc-pentapeptide, known as lipid I. The protein is Phospho-N-acetylmuramoyl-pentapeptide-transferase of Acinetobacter baumannii (strain AB0057).